The sequence spans 671 residues: DNA ligase (671 aa).

NAD(+) is bound by residues 36–40, 85–86, and Glu116; these read DAEYD and SL. The active-site N6-AMP-lysine intermediate is the Lys118. 4 residues coordinate NAD(+): Arg139, Glu176, Lys292, and Lys316. Positions 410, 413, 428, and 434 each coordinate Zn(2+). Residues 591–671 enclose the BRCT domain; the sequence is QKGGRFQGMT…QFLAMFSEKE (81 aa).

The protein belongs to the NAD-dependent DNA ligase family. LigA subfamily. Requires Mg(2+) as cofactor. The cofactor is Mn(2+).

It carries out the reaction NAD(+) + (deoxyribonucleotide)n-3'-hydroxyl + 5'-phospho-(deoxyribonucleotide)m = (deoxyribonucleotide)n+m + AMP + beta-nicotinamide D-nucleotide.. DNA ligase that catalyzes the formation of phosphodiester linkages between 5'-phosphoryl and 3'-hydroxyl groups in double-stranded DNA using NAD as a coenzyme and as the energy source for the reaction. It is essential for DNA replication and repair of damaged DNA. The chain is DNA ligase from Acidithiobacillus ferrooxidans (strain ATCC 23270 / DSM 14882 / CIP 104768 / NCIMB 8455) (Ferrobacillus ferrooxidans (strain ATCC 23270)).